A 152-amino-acid chain; its full sequence is Protein SprT-like (152 aa).

The 142-residue stretch at 7-148 (QRLVEEVSLQ…GKCKGKLILI (142 aa)) folds into the SprT-like domain. Residue H67 coordinates Zn(2+). E68 is an active-site residue. H71 provides a ligand contact to Zn(2+).

This sequence belongs to the SprT family. It depends on Zn(2+) as a cofactor.

The protein resides in the cytoplasm. In Bacillus cereus (strain ATCC 10987 / NRS 248), this protein is Protein SprT-like.